The following is a 404-amino-acid chain: Glycerol-1-phosphate dehydrogenase [NAD(P)+] (404 aa).

Residues Asp56, 118–122, and 140–143 contribute to the NAD(+) site; these read GTIHD and TAPS. Residue Asp145 coordinates substrate. Ser149 is an NAD(+) binding site. Asp192 contacts substrate. Ni(2+) contacts are provided by Asp192 and His272. Residue His276 participates in substrate binding. His292 is a Ni(2+) binding site.

The protein belongs to the glycerol-1-phosphate dehydrogenase family. As to quaternary structure, homodimer. Ni(2+) is required as a cofactor.

It localises to the cytoplasm. It catalyses the reaction sn-glycerol 1-phosphate + NAD(+) = dihydroxyacetone phosphate + NADH + H(+). It carries out the reaction sn-glycerol 1-phosphate + NADP(+) = dihydroxyacetone phosphate + NADPH + H(+). Catalyzes the NAD(P)H-dependent reduction of dihydroxyacetonephosphate (DHAP or glycerone phosphate) to glycerol 1-phosphate (G1P). The G1P thus generated is probably used for the synthesis of phosphoglycerolipids in Gram-positive bacterial species. This chain is Glycerol-1-phosphate dehydrogenase [NAD(P)+], found in Geobacillus stearothermophilus (Bacillus stearothermophilus).